The primary structure comprises 60 residues: UPF0434 protein Mfla_2088 (60 aa).

It belongs to the UPF0434 family.

The sequence is that of UPF0434 protein Mfla_2088 from Methylobacillus flagellatus (strain ATCC 51484 / DSM 6875 / VKM B-1610 / KT).